A 420-amino-acid polypeptide reads, in one-letter code: Protein translocase subunit SecY (420 aa).

10 helical membrane passes run Ile-9–Gly-29, Leu-61–Leu-81, Ile-104–Leu-124, Val-141–Gly-161, Ile-173–Phe-193, Ile-203–Val-223, Leu-257–Leu-277, Tyr-300–Phe-320, Lys-355–Val-375, and Ala-377–Ile-397.

This sequence belongs to the SecY/SEC61-alpha family. In terms of assembly, component of the Sec protein translocase complex. Heterotrimer consisting of SecY, SecE and SecG subunits. The heterotrimers can form oligomers, although 1 heterotrimer is thought to be able to translocate proteins. Interacts with the ribosome. Interacts with SecDF, and other proteins may be involved. Interacts with SecA.

It localises to the cell inner membrane. Functionally, the central subunit of the protein translocation channel SecYEG. Consists of two halves formed by TMs 1-5 and 6-10. These two domains form a lateral gate at the front which open onto the bilayer between TMs 2 and 7, and are clamped together by SecE at the back. The channel is closed by both a pore ring composed of hydrophobic SecY resides and a short helix (helix 2A) on the extracellular side of the membrane which forms a plug. The plug probably moves laterally to allow the channel to open. The ring and the pore may move independently. This Helicobacter pylori (strain ATCC 700392 / 26695) (Campylobacter pylori) protein is Protein translocase subunit SecY.